The following is a 207-amino-acid chain: Ribosomal RNA large subunit methyltransferase E (207 aa).

5 residues coordinate S-adenosyl-L-methionine: Gly60, Trp62, Asp80, Asp96, and Asp121. The active-site Proton acceptor is Lys161.

This sequence belongs to the class I-like SAM-binding methyltransferase superfamily. RNA methyltransferase RlmE family.

It localises to the cytoplasm. The enzyme catalyses uridine(2552) in 23S rRNA + S-adenosyl-L-methionine = 2'-O-methyluridine(2552) in 23S rRNA + S-adenosyl-L-homocysteine + H(+). Functionally, specifically methylates the uridine in position 2552 of 23S rRNA at the 2'-O position of the ribose in the fully assembled 50S ribosomal subunit. In Azotobacter vinelandii (strain DJ / ATCC BAA-1303), this protein is Ribosomal RNA large subunit methyltransferase E.